Consider the following 379-residue polypeptide: Homoserine O-succinyltransferase (379 aa).

Positions 48-357 (NAVLICHALS…SAHGHDAFLM (310 aa)) constitute an AB hydrolase-1 domain. Ser154 functions as the Nucleophile in the catalytic mechanism. Residue Arg224 participates in substrate binding. Active-site residues include Asp319 and His352. A substrate-binding site is contributed by Asp353.

This sequence belongs to the AB hydrolase superfamily. MetX family. In terms of assembly, homodimer.

Its subcellular location is the cytoplasm. It catalyses the reaction L-homoserine + succinyl-CoA = O-succinyl-L-homoserine + CoA. It participates in amino-acid biosynthesis; L-methionine biosynthesis via de novo pathway; O-succinyl-L-homoserine from L-homoserine: step 1/1. Transfers a succinyl group from succinyl-CoA to L-homoserine, forming succinyl-L-homoserine. This is Homoserine O-succinyltransferase from Neisseria meningitidis serogroup B (strain ATCC BAA-335 / MC58).